Reading from the N-terminus, the 71-residue chain is Light-harvesting protein B-800/850 alpha chain (71 aa).

Residues 1-15 (MNQGKVWRVVKPTVG) are Cytoplasmic-facing. Residues 16–36 (VPVYLGAVAVTALILHGGLLA) traverse the membrane as a helical segment. A bacteriochlorophyll is bound at residue histidine 31. The Periplasmic portion of the chain corresponds to 37 to 50 (KTDWFGAYWNGGKK). Residues 51-71 (AAAAAAAVAPAPVAAPQAPAQ) form a helical membrane-spanning segment.

Belongs to the antenna complex alpha subunit family. As to quaternary structure, an alpha/beta heterodimer conjugated to 3 bacteriochlorophyll molecules. The core complex is formed by different alpha and beta chains, binding bacteriochlorophyll molecules, and arranged most probably in tetrameric structures disposed around the reaction center. The non-pigmented gamma chains may constitute additional components.

It is found in the cell membrane. Functionally, antenna complexes are light-harvesting systems, which transfer the excitation energy to the reaction centers. The chain is Light-harvesting protein B-800/850 alpha chain (pucA) from Rubrivivax gelatinosus (Rhodocyclus gelatinosus).